A 51-amino-acid chain; its full sequence is Insulin (51 aa).

Intrachain disulfides connect Cys-7/Cys-37, Cys-19/Cys-50, and Cys-36/Cys-41.

The protein belongs to the insulin family. Heterodimer of a B chain and an A chain linked by two disulfide bonds.

Its subcellular location is the secreted. Functionally, insulin decreases blood glucose concentration. It increases cell permeability to monosaccharides, amino acids and fatty acids. It accelerates glycolysis, the pentose phosphate cycle, and glycogen synthesis in liver. In Camelus dromedarius (Dromedary), this protein is Insulin (INS).